The sequence spans 72 residues: Conotoxin Lt6.3 (72 aa).

Positions 1–22 (MKLTSVVIVAVLFLAACQLTTS) are cleaved as a signal peptide. Positions 23–46 (DGSRGTWKDRAVRSITKVSMLRWP) are excised as a propeptide. Cystine bridges form between C47–C61, C54–C64, and C60–C71.

It belongs to the conotoxin O1 superfamily. Expressed by the venom duct.

The protein localises to the secreted. This Conus litteratus (Lettered cone) protein is Conotoxin Lt6.3.